The sequence spans 172 residues: Shikimate kinase (172 aa).

ATP is bound at residue 14 to 19 (GAGKST). Position 18 (Ser18) interacts with Mg(2+). The substrate site is built by Asp36, Arg60, and Gly82. Residue Arg120 coordinates ATP. Arg139 contributes to the substrate binding site. ATP is bound at residue Gln156.

It belongs to the shikimate kinase family. In terms of assembly, monomer. Mg(2+) serves as cofactor.

It localises to the cytoplasm. The enzyme catalyses shikimate + ATP = 3-phosphoshikimate + ADP + H(+). Its pathway is metabolic intermediate biosynthesis; chorismate biosynthesis; chorismate from D-erythrose 4-phosphate and phosphoenolpyruvate: step 5/7. Its function is as follows. Catalyzes the specific phosphorylation of the 3-hydroxyl group of shikimic acid using ATP as a cosubstrate. This Vibrio vulnificus (strain CMCP6) protein is Shikimate kinase.